A 328-amino-acid chain; its full sequence is Beta-ketoacyl-[acyl-carrier-protein] synthase III (328 aa).

Catalysis depends on residues Cys122 and His255. Residues 256-260 are ACP-binding; the sequence is QANIR. The active site involves Asn285.

The protein belongs to the thiolase-like superfamily. FabH family. Homodimer.

The protein resides in the cytoplasm. The enzyme catalyses malonyl-[ACP] + acetyl-CoA + H(+) = 3-oxobutanoyl-[ACP] + CO2 + CoA. Its pathway is lipid metabolism; fatty acid biosynthesis. Its function is as follows. Catalyzes the condensation reaction of fatty acid synthesis by the addition to an acyl acceptor of two carbons from malonyl-ACP. Catalyzes the first condensation reaction which initiates fatty acid synthesis and may therefore play a role in governing the total rate of fatty acid production. Possesses both acetoacetyl-ACP synthase and acetyl transacylase activities. Its substrate specificity determines the biosynthesis of branched-chain and/or straight-chain of fatty acids. This chain is Beta-ketoacyl-[acyl-carrier-protein] synthase III, found in Polynucleobacter necessarius subsp. necessarius (strain STIR1).